A 932-amino-acid polypeptide reads, in one-letter code: F-box protein COS111 (932 aa).

The segment at 29–63 (VSAKHRPSSTGVYGHDASTVDHASRSNNNLNLTRS) is disordered. Positions 53–63 (RSNNNLNLTRS) are enriched in low complexity. The 48-residue stretch at 146–193 (RKEISDLPDEVLRNILSNVKDDQRTLVNCLYVNKAFYNATKPTLYERP) folds into the F-box domain. The segment covering 346–358 (LSEGKSSDNGNNG) has biased composition (polar residues). 4 disordered regions span residues 346–369 (LSEG…SVSS), 389–450 (TLSG…SNWF), 470–500 (ISSK…TEPF), and 863–893 (SVLP…SNDP). 2 stretches are compositionally biased toward low complexity: residues 395-431 (NNSS…SQID) and 438-447 (TSSKSTSSTS). The segment covering 876-890 (DDTNNGENTIAQPFS) has biased composition (polar residues).

F-box protein probably involved in ubiquitin conjugation pathway. The sequence is that of F-box protein COS111 (COS111) from Candida glabrata (strain ATCC 2001 / BCRC 20586 / JCM 3761 / NBRC 0622 / NRRL Y-65 / CBS 138) (Yeast).